A 702-amino-acid chain; its full sequence is Choline transporter-like protein 5-A (702 aa).

A helical transmembrane segment spans residues 21-41 (VLCCVLFVIVILGYIALGTVA). The Extracellular segment spans residues 42–225 (WIHGDPRKVI…KIVEDYASCW (184 aa)). Residues Asn-120, Asn-173, and Asn-180 are each glycosylated (N-linked (GlcNAc...) asparagine). A helical transmembrane segment spans residues 226-246 (YWIVIGLFIALVISLIFILLL). Residues 247-249 (RFT) are Cytoplasmic-facing. A helical membrane pass occupies residues 250-270 (AGFLLWFIIFAVILLVAYGIW). At 271-308 (HCYWEFAVLRETPGADVTISDIGFQTDLHVYLQLSQTW) the chain is on the extracellular side. The chain crosses the membrane as a helical span at residues 309–329 (LVFMVTLGLTEASIVLMLIFL). Over 330 to 334 (RKRVR) the chain is Cytoplasmic. Residues 335–355 (IAIALLREGSRAISYIMSALF) form a helical membrane-spanning segment. Over 356–357 (YP) the chain is Extracellular. The helical transmembrane segment at 358–378 (IITFVLLAICISYWAMTALFL) threads the bilayer. The Cytoplasmic segment spans residues 379–443 (ASSGDAVYKV…RYIFILQLCN (65 aa)). The helical transmembrane segment at 444 to 464 (LLVFLWLVNFTIALGQCTVAG) threads the bilayer. Topologically, residues 465–498 (AFASYYWARRKPADIPPCPVFSSFSRALRYHTGS) are extracellular. A helical transmembrane segment spans residues 499–519 (LAFGSLILAVVQLIRVILEYL). Over 520–593 (DHKLKGAHNA…RVAVLDKVTD (74 aa)) the chain is Cytoplasmic. The chain crosses the membrane as a helical span at residues 594 to 614 (FLLFLGKLLIAGSVGVIAFFL). The Extracellular segment spans residues 615–632 (FTRKIPIIQEEVPVLNYY). Residues 633-653 (CVPLLTVILGSYLIAHSFFSV) traverse the membrane as a helical segment. Over 654 to 699 (YAMCVDTLFLCFCEDLERNDGTTAKPFFMSPGLKRILGKAEQSPKK) the chain is Cytoplasmic.

Belongs to the CTL (choline transporter-like) family.

The protein localises to the cell membrane. It catalyses the reaction choline(out) + n H(+)(in) = choline(in) + n H(+)(out). In terms of biological role, choline/H+ antiporter. This Danio rerio (Zebrafish) protein is Choline transporter-like protein 5-A (slc44a5a).